We begin with the raw amino-acid sequence, 42 residues long: Photosystem II reaction center protein J (42 aa).

The chain crosses the membrane as a helical span at residues 10-30 (IPLWLVGTVVGTLAIGLLAVF).

It belongs to the PsbJ family. PSII is composed of 1 copy each of membrane proteins PsbA, PsbB, PsbC, PsbD, PsbE, PsbF, PsbH, PsbI, PsbJ, PsbK, PsbL, PsbM, PsbT, PsbX, PsbY, PsbZ, Psb30/Ycf12, at least 3 peripheral proteins of the oxygen-evolving complex and a large number of cofactors. It forms dimeric complexes.

It localises to the plastid. It is found in the chloroplast thylakoid membrane. Functionally, one of the components of the core complex of photosystem II (PSII). PSII is a light-driven water:plastoquinone oxidoreductase that uses light energy to abstract electrons from H(2)O, generating O(2) and a proton gradient subsequently used for ATP formation. It consists of a core antenna complex that captures photons, and an electron transfer chain that converts photonic excitation into a charge separation. In Chlamydomonas reinhardtii (Chlamydomonas smithii), this protein is Photosystem II reaction center protein J.